The primary structure comprises 535 residues: Beta-hexosaminidase 3 (535 aa).

The first 24 residues, 1–24, serve as a signal peptide directing secretion; sequence MRGSGAKIAGVLPLFMLFIAGTIS. Residue N92 is glycosylated (N-linked (GlcNAc...) asparagine). The cysteines at positions 292 and 334 are disulfide-linked. Residue E329 is the Proton donor of the active site. 4 N-linked (GlcNAc...) asparagine glycosylation sites follow: N331, N405, N441, and N496. The cysteines at positions 506 and 532 are disulfide-linked.

It belongs to the glycosyl hydrolase 20 family. Post-translationally, N-glycosylated. In terms of tissue distribution, expressed in roots, leaves, stems, flowers and siliques.

The protein resides in the cell membrane. The catalysed reaction is Hydrolysis of terminal non-reducing N-acetyl-D-hexosamine residues in N-acetyl-beta-D-hexosaminides.. Slightly inhibited by N-acetylcastanospermine. In terms of biological role, has a broad substrate specificity. Can use synthetic substrates such as pyridylaminated chitotriose, p-nitrophenyl-beta-N-acetylglucosaminide, p-nitrophenyl-2-acetamido-2-deoxy-beta-D-glucopyranoside (pNP-GlcNAc), p-nitrophenyl-2-acetamido-2-deoxy-beta-D-galactopyranoside (pNP-GalNAc), 4-methylumbelliferyl-2-acetamido-2-deoxy-beta-D-glucopyranoside (MU-GlcNAc), and 4-methylumbelliferyl-6-sulfo-2-acetamido-2-deoxy-beta-D-glucopyranoside (MU-GlcNAc-6SO(4)) as substrates. Removes terminal GlcNAc residues from alpha1,3- and alpha1,6-mannosyl branches of biantennary N-glycans without any strict branch preference. Required for the presence of paucimannosidic N-glycans in glycoproteins of roots and leaves. The polypeptide is Beta-hexosaminidase 3 (HEXO3) (Arabidopsis thaliana (Mouse-ear cress)).